Reading from the N-terminus, the 358-residue chain is cAMP-dependent protein kinase catalytic subunit PRKX (358 aa).

Methionine 1 carries the post-translational modification N-acetylmethionine. Positions 1-34 (MEAPGLAQAAAAESDSRKVAEETPDGAPALCPSP) are disordered. In terms of domain architecture, Protein kinase spans 49 to 303 (FDTLATVGTG…ANDVKHHRWF (255 aa)). ATP is bound by residues 55–63 (VGTGTFGRV) and lysine 78. Aspartate 172 acts as the Proton acceptor in catalysis. Threonine 203 carries the post-translational modification Phosphothreonine. The AGC-kinase C-terminal domain maps to 304 to 358 (RSVDWEAVPQRKLKPPIVPKIAGDGDTSNFETYPENDWDTAAPVPQKDLEIFKNF).

It belongs to the protein kinase superfamily. AGC Ser/Thr protein kinase family. cAMP subfamily. Like other cAMP-dependent protein kinases, the inactive holoenzyme is probably composed of 2 PRKX catalytic subunits and a dimer of regulatory subunits. Interacts (cAMP-dependent) specifically with the regulatory subunits PRKAR1A and PRKAR1B. Compared to other cAMP-dependent serine/threonine protein kinases, does not interact with the 2 other PKA regulatory subunits PRKAR2A and PRKAR2B. Interacts with cAMP-dependent protein kinase inhibitor/PKI proteins; inhibits PRKX. Interacts with GPKOW. Interacts with SMAD6. Interacts with PKD1; involved in differentiation and controlled morphogenesis of the kidney. Interacts with PIN1 (via WW domain). Post-translationally, phosphorylated; autophosphorylates in vitro. Widely expressed (at protein level). Specifically expressed in blood by macrophages and granulocytes according to PubMed:9860982.

It localises to the cytoplasm. Its subcellular location is the nucleus. It catalyses the reaction L-seryl-[protein] + ATP = O-phospho-L-seryl-[protein] + ADP + H(+). It carries out the reaction L-threonyl-[protein] + ATP = O-phospho-L-threonyl-[protein] + ADP + H(+). Binding of cAMP to the PRKAR1A or PRKAR1B regulatory subunits induces dissociation of the holoenzyme heterotetramer. The released monomeric PRKX is then active and able to phosphorylate its substrates. Its function is as follows. Serine/threonine protein kinase regulated by and mediating cAMP signaling in cells. Acts through phosphorylation of downstream targets that may include CREB, SMAD6 and PKD1 and has multiple functions in cellular differentiation and epithelial morphogenesis. Regulates myeloid cell differentiation through SMAD6 phosphorylation. Involved in nephrogenesis by stimulating renal epithelial cell migration and tubulogenesis. Also involved in angiogenesis through stimulation of endothelial cell proliferation, migration and vascular-like structure formation. This is cAMP-dependent protein kinase catalytic subunit PRKX (PRKX) from Homo sapiens (Human).